Reading from the N-terminus, the 201-residue chain is 3-isopropylmalate dehydratase small subunit (201 aa).

It belongs to the LeuD family. LeuD type 1 subfamily. In terms of assembly, heterodimer of LeuC and LeuD.

The enzyme catalyses (2R,3S)-3-isopropylmalate = (2S)-2-isopropylmalate. Its pathway is amino-acid biosynthesis; L-leucine biosynthesis; L-leucine from 3-methyl-2-oxobutanoate: step 2/4. Its function is as follows. Catalyzes the isomerization between 2-isopropylmalate and 3-isopropylmalate, via the formation of 2-isopropylmaleate. This chain is 3-isopropylmalate dehydratase small subunit, found in Cereibacter sphaeroides (strain KD131 / KCTC 12085) (Rhodobacter sphaeroides).